A 256-amino-acid polypeptide reads, in one-letter code: 4-hydroxy-tetrahydrodipicolinate reductase (256 aa).

An NAD(+)-binding site is contributed by Gly8–Val13. Position 36 (Lys36) interacts with NADP(+). NAD(+) is bound by residues Gly89–Thr91 and Ala113–Met116. His145 serves as the catalytic Proton donor/acceptor. Residue His146 participates in (S)-2,3,4,5-tetrahydrodipicolinate binding. Lys149 serves as the catalytic Proton donor. Residue Gly155 to Thr156 participates in (S)-2,3,4,5-tetrahydrodipicolinate binding.

The protein belongs to the DapB family.

The protein resides in the cytoplasm. The catalysed reaction is (S)-2,3,4,5-tetrahydrodipicolinate + NAD(+) + H2O = (2S,4S)-4-hydroxy-2,3,4,5-tetrahydrodipicolinate + NADH + H(+). It carries out the reaction (S)-2,3,4,5-tetrahydrodipicolinate + NADP(+) + H2O = (2S,4S)-4-hydroxy-2,3,4,5-tetrahydrodipicolinate + NADPH + H(+). The protein operates within amino-acid biosynthesis; L-lysine biosynthesis via DAP pathway; (S)-tetrahydrodipicolinate from L-aspartate: step 4/4. In terms of biological role, catalyzes the conversion of 4-hydroxy-tetrahydrodipicolinate (HTPA) to tetrahydrodipicolinate. This Wolinella succinogenes (strain ATCC 29543 / DSM 1740 / CCUG 13145 / JCM 31913 / LMG 7466 / NCTC 11488 / FDC 602W) (Vibrio succinogenes) protein is 4-hydroxy-tetrahydrodipicolinate reductase.